The following is a 184-amino-acid chain: MADLKDERGNPIHLTDAYGNPVQLSDEFGNPMHITGVASSAPQYKDSVTGNIAEYPTEAPPAGVAAGTGAAATTAAGVTTSETTTGQEHHGSLGEHLRRSGSSSSSSSEDDGQGGRRKKSIKDKIKDKLGGGKHKDEQTPTTATTTGPTTTTTTTGAAADQHHEKKGILEKIKEKLPGHHNHHP.

The disordered stretch occupies residues 49–184 (TGNIAEYPTE…KLPGHHNHHP (136 aa)). Residues 60 to 86 (PPAGVAAGTGAAATTAAGVTTSETTTG) are compositionally biased toward low complexity. Basic and acidic residues-rich tracts occupy residues 87–98 (QEHHGSLGEHLR) and 122–138 (KDKIKDKLGGGKHKDEQ). Over residues 139–159 (TPTTATTTGPTTTTTTTGAAA) the composition is skewed to low complexity. Residues 160 to 177 (DQHHEKKGILEKIKEKLP) are compositionally biased toward basic and acidic residues.

This sequence belongs to the plant dehydrin family.

Its function is as follows. LEA protein are late embryogenesis abundant in higher plant seed embryos. There are two subsets of LEA proteins (5a, and 5b), the first ones are expressed when the cotyledon weight reach 80 mg and the second set are expressed above 100 mg. The function of those proteins is not known. The protein is Late embryogenesis abundant protein of Raphanus sativus (Radish).